The sequence spans 901 residues: Protein translocase subunit SecA (901 aa).

ATP-binding positions include glutamine 85, 103–107, and aspartate 510; that span reads GEGKT. Residues 847–901 are disordered; it reads TRINQNNLPVDENSQTTQNSETEDYSDRRIGRNEPCPCGSGKKYKHCHGSRVARQ. Positions 848–866 are enriched in polar residues; the sequence is RINQNNLPVDENSQTTQNS. Residues cysteine 882, cysteine 884, cysteine 893, and histidine 894 each contribute to the Zn(2+) site. Residues 888–901 are compositionally biased toward basic residues; it reads KKYKHCHGSRVARQ.

Belongs to the SecA family. In terms of assembly, monomer and homodimer. Part of the essential Sec protein translocation apparatus which comprises SecA, SecYEG and auxiliary proteins SecDF-YajC and YidC. Zn(2+) is required as a cofactor.

The protein localises to the cell inner membrane. Its subcellular location is the cytoplasm. The catalysed reaction is ATP + H2O + cellular proteinSide 1 = ADP + phosphate + cellular proteinSide 2.. Part of the Sec protein translocase complex. Interacts with the SecYEG preprotein conducting channel. Has a central role in coupling the hydrolysis of ATP to the transfer of proteins into and across the cell membrane, serving both as a receptor for the preprotein-SecB complex and as an ATP-driven molecular motor driving the stepwise translocation of polypeptide chains across the membrane. The chain is Protein translocase subunit SecA from Haemophilus influenzae (strain PittGG).